The chain runs to 211 residues: Large ribosomal subunit protein uL4 (211 aa).

Positions 50-77 (STLTKGEVSGGGKKPYKQKHTGKARQGS) are disordered. Over residues 63-72 (KPYKQKHTGK) the composition is skewed to basic residues.

Belongs to the universal ribosomal protein uL4 family. In terms of assembly, part of the 50S ribosomal subunit.

In terms of biological role, one of the primary rRNA binding proteins, this protein initially binds near the 5'-end of the 23S rRNA. It is important during the early stages of 50S assembly. It makes multiple contacts with different domains of the 23S rRNA in the assembled 50S subunit and ribosome. Forms part of the polypeptide exit tunnel. This is Large ribosomal subunit protein uL4 from Mycoplasma genitalium (strain ATCC 33530 / DSM 19775 / NCTC 10195 / G37) (Mycoplasmoides genitalium).